Reading from the N-terminus, the 150-residue chain is Large ribosomal subunit protein bL9 (150 aa).

The protein belongs to the bacterial ribosomal protein bL9 family.

In terms of biological role, binds to the 23S rRNA. This Sodalis glossinidius (strain morsitans) protein is Large ribosomal subunit protein bL9.